Consider the following 122-residue polypeptide: Putative protein adenylyltransferase MJ1547 (122 aa).

The short motif at 11-25 (GSYAKNEYTKRSDID) is the GSX(10)DXD motif element. Mg(2+)-binding residues include aspartate 23, aspartate 25, and aspartate 48.

Belongs to the MntA antitoxin family. In terms of assembly, probably forms a complex with cognate toxin MJ1548. Requires Mg(2+) as cofactor.

It catalyses the reaction L-tyrosyl-[protein] + ATP = O-(5'-adenylyl)-L-tyrosyl-[protein] + diphosphate. The enzyme catalyses O-(5'-adenylyl)-L-tyrosyl-[protein] + ATP = O-[5'-(adenylyl-(5'-&gt;3')-adenylyl)]-L-tyrosyl-[protein] + diphosphate. Probable antitoxin component of a putative type VII toxin-antitoxin (TA) system. Neutralizes cognate toxic MJ1548 by di-AMPylation. The polypeptide is Putative protein adenylyltransferase MJ1547 (Methanocaldococcus jannaschii (strain ATCC 43067 / DSM 2661 / JAL-1 / JCM 10045 / NBRC 100440) (Methanococcus jannaschii)).